The following is a 365-amino-acid chain: Putative agmatine deiminase (365 aa).

Cys-357 serves as the catalytic Amidino-cysteine intermediate.

The protein belongs to the agmatine deiminase family.

It carries out the reaction agmatine + H2O = N-carbamoylputrescine + NH4(+). This chain is Putative agmatine deiminase, found in Yersinia pseudotuberculosis serotype O:1b (strain IP 31758).